The sequence spans 245 residues: Ubiquinone biosynthesis O-methyltransferase (245 aa).

Arginine 49, glycine 69, aspartate 90, and methionine 134 together coordinate S-adenosyl-L-methionine.

It belongs to the methyltransferase superfamily. UbiG/COQ3 family.

It carries out the reaction a 3-demethylubiquinol + S-adenosyl-L-methionine = a ubiquinol + S-adenosyl-L-homocysteine + H(+). It catalyses the reaction a 3-(all-trans-polyprenyl)benzene-1,2-diol + S-adenosyl-L-methionine = a 2-methoxy-6-(all-trans-polyprenyl)phenol + S-adenosyl-L-homocysteine + H(+). It functions in the pathway cofactor biosynthesis; ubiquinone biosynthesis. Functionally, O-methyltransferase that catalyzes the 2 O-methylation steps in the ubiquinone biosynthetic pathway. The sequence is that of Ubiquinone biosynthesis O-methyltransferase from Vibrio cholerae serotype O1 (strain ATCC 39541 / Classical Ogawa 395 / O395).